A 392-amino-acid polypeptide reads, in one-letter code: Tryptophan 2,3-dioxygenase (392 aa).

Residues 57-61 (FIVTH) and Arg128 each bind substrate. His313 provides a ligand contact to heme. Thr328 serves as a coordination point for substrate.

Belongs to the tryptophan 2,3-dioxygenase family. In terms of assembly, homotetramer. Dimer of dimers. Heme serves as cofactor.

The catalysed reaction is L-tryptophan + O2 = N-formyl-L-kynurenine. The protein operates within amino-acid degradation; L-tryptophan degradation via kynurenine pathway; L-kynurenine from L-tryptophan: step 1/2. It functions in the pathway pigment biosynthesis; ommochrome biosynthesis. Heme-dependent dioxygenase that catalyzes the oxidative cleavage of the L-tryptophan (L-Trp) pyrrole ring and converts L-tryptophan to N-formyl-L-kynurenine. Catalyzes the oxidative cleavage of the indole moiety. The chain is Tryptophan 2,3-dioxygenase from Anopheles gambiae (African malaria mosquito).